Consider the following 144-residue polypeptide: Large ribosomal subunit protein uL15 (144 aa).

Residues 1–58 are disordered; that stretch reads MRLNELAPEPGSRPSAKRVGRGIGSGLGKTGGRGHKGLKSRSGGSVAPGFEGGQQPLA. Positions 21–31 are enriched in gly residues; that stretch reads RGIGSGLGKTG.

This sequence belongs to the universal ribosomal protein uL15 family. Part of the 50S ribosomal subunit.

Binds to the 23S rRNA. The polypeptide is Large ribosomal subunit protein uL15 (Marinobacter nauticus (strain ATCC 700491 / DSM 11845 / VT8) (Marinobacter aquaeolei)).